A 201-amino-acid polypeptide reads, in one-letter code: Protamine-like protein 99C (201 aa).

The disordered stretch occupies residues 93–143 (GGQQSSCQRQSPSARLRESERRSSRSKTLCRSAKNRQRGKPKPQQSKRRLS). Residues 94–104 (GQQSSCQRQSP) show a composition bias toward polar residues. Over residues 125-143 (AKNRQRGKPKPQQSKRRLS) the composition is skewed to basic residues.

The protein belongs to the UPF0771 family.

The protein resides in the nucleus. It localises to the chromosome. Functionally, regulates chromatin compaction in spermatid nuclei and is essential for male fertility. Functions in parallel with other chromatin-condensing proteins such as ProtA, ProtB and Mst77F. This chain is Protamine-like protein 99C, found in Drosophila melanogaster (Fruit fly).